Here is a 199-residue protein sequence, read N- to C-terminus: Pyridoxine/pyridoxamine 5'-phosphate oxidase (199 aa).

Residues 44 to 49 (RTVLLK), 59 to 60 (YT), K66, and Q91 each bind FMN. K49 is a binding site for substrate. Positions 109, 113, and 117 each coordinate substrate. FMN contacts are provided by residues 126-127 (QS) and W171. Position 177-179 (177-179 (RLH)) interacts with substrate. Residue R181 coordinates FMN.

The protein belongs to the pyridoxamine 5'-phosphate oxidase family. Homodimer. FMN serves as cofactor.

It catalyses the reaction pyridoxamine 5'-phosphate + O2 + H2O = pyridoxal 5'-phosphate + H2O2 + NH4(+). It carries out the reaction pyridoxine 5'-phosphate + O2 = pyridoxal 5'-phosphate + H2O2. It functions in the pathway cofactor metabolism; pyridoxal 5'-phosphate salvage; pyridoxal 5'-phosphate from pyridoxamine 5'-phosphate: step 1/1. It participates in cofactor metabolism; pyridoxal 5'-phosphate salvage; pyridoxal 5'-phosphate from pyridoxine 5'-phosphate: step 1/1. Catalyzes the oxidation of either pyridoxine 5'-phosphate (PNP) or pyridoxamine 5'-phosphate (PMP) into pyridoxal 5'-phosphate (PLP). This chain is Pyridoxine/pyridoxamine 5'-phosphate oxidase, found in Xanthomonas campestris pv. campestris (strain 8004).